We begin with the raw amino-acid sequence, 419 residues long: Transcription termination factor Rho (419 aa).

Residues 48 to 123 (GFTCSGTLEI…VRLDSINGDH (76 aa)) enclose the Rho RNA-BD domain. ATP is bound by residues 169-174 (GKGQRA), 181-186 (KIGKTV), and Arg212.

Belongs to the Rho family. In terms of assembly, homohexamer. The homohexamer assembles into an open ring structure.

Functionally, facilitates transcription termination by a mechanism that involves Rho binding to the nascent RNA, activation of Rho's RNA-dependent ATPase activity, and release of the mRNA from the DNA template. This chain is Transcription termination factor Rho, found in Neisseria gonorrhoeae.